Reading from the N-terminus, the 512-residue chain is D-alanine--D-alanyl carrier protein ligase (512 aa).

152–153 (TS) contacts ATP. Aspartate 199 contributes to the D-alanine binding site. 294–299 (NAYGPT) provides a ligand contact to ATP. Valine 303 lines the D-alanine pocket. Residues aspartate 385, 397–400 (YGGR), and lysine 499 contribute to the ATP site. D-alanine is bound at residue lysine 499.

Belongs to the ATP-dependent AMP-binding enzyme family. DltA subfamily.

It is found in the cytoplasm. The catalysed reaction is holo-[D-alanyl-carrier protein] + D-alanine + ATP = D-alanyl-[D-alanyl-carrier protein] + AMP + diphosphate. It functions in the pathway cell wall biogenesis; lipoteichoic acid biosynthesis. Functionally, catalyzes the first step in the D-alanylation of lipoteichoic acid (LTA), the activation of D-alanine and its transfer onto the D-alanyl carrier protein (Dcp) DltC. In an ATP-dependent two-step reaction, forms a high energy D-alanyl-AMP intermediate, followed by transfer of the D-alanyl residue as a thiol ester to the phosphopantheinyl prosthetic group of the Dcp. D-alanylation of LTA plays an important role in modulating the properties of the cell wall in Gram-positive bacteria, influencing the net charge of the cell wall. The polypeptide is D-alanine--D-alanyl carrier protein ligase (Streptococcus pyogenes serotype M1).